We begin with the raw amino-acid sequence, 30 residues long: Conotoxin TVIIA (30 aa).

Disulfide bonds link C2-C14, C9-C19, and C13-C24. P10 and P11 each carry 4-hydroxyproline.

In terms of processing, three different forms of TVIIA exist. Pro-10 and Pro-11 of conotoxin TVIIA are hydroxylated in TVIIA, whereas Pro-10 is not hydroxylated in [Pro10]TVIIA and neither Pro-10 nor Pro-11 are hydroxylated in [Pro10,11]TVIIA. In terms of tissue distribution, expressed by the venom duct.

It is found in the secreted. In terms of biological role, by structural similarity with conotoxin GS, may inhibit the sodium channel (Nav). No effect was observed upon intracranial injections into mice and intraperitoneal injections into goldfish (25 ug). In Conus tulipa (Fish-hunting cone snail), this protein is Conotoxin TVIIA.